We begin with the raw amino-acid sequence, 88 residues long: Large ribosomal subunit protein bL27 (88 aa).

The interval 1 to 21 (MAHKKGASSSRNGRDSNAKRL) is disordered.

It belongs to the bacterial ribosomal protein bL27 family.

The sequence is that of Large ribosomal subunit protein bL27 from Thermobifida fusca (strain YX).